A 74-amino-acid polypeptide reads, in one-letter code: Putative defensin-like protein 36 (74 aa).

Positions 1–22 are cleaved as a signal peptide; sequence MASNKVSFFLVLCLCILLAGEC. 3 disulfide bridges follow: Cys-33–Cys-59, Cys-45–Cys-69, and Cys-49–Cys-71.

This sequence belongs to the DEFL family.

The protein localises to the secreted. The protein is Putative defensin-like protein 36 of Arabidopsis thaliana (Mouse-ear cress).